Reading from the N-terminus, the 277-residue chain is Orotidine 5'-phosphate decarboxylase (277 aa).

Residue K95 is the Proton donor of the active site.

Belongs to the OMP decarboxylase family. Type 2 subfamily.

The enzyme catalyses orotidine 5'-phosphate + H(+) = UMP + CO2. It functions in the pathway pyrimidine metabolism; UMP biosynthesis via de novo pathway; UMP from orotate: step 2/2. This chain is Orotidine 5'-phosphate decarboxylase, found in Mycolicibacterium vanbaalenii (strain DSM 7251 / JCM 13017 / BCRC 16820 / KCTC 9966 / NRRL B-24157 / PYR-1) (Mycobacterium vanbaalenii).